The following is a 247-amino-acid chain: UPF0309 protein Lm4b_02611 (247 aa).

The 184-residue stretch at 31 to 214 (VAESIENDGV…ETMVNDNFTP (184 aa)) folds into the SIS domain.

It belongs to the UPF0309 family.

This is UPF0309 protein Lm4b_02611 from Listeria monocytogenes serotype 4b (strain CLIP80459).